The sequence spans 325 residues: Germination protease (325 aa).

Residues 1-7 (MYNVRTD) constitute a propeptide that is removed on maturation.

Belongs to the peptidase A25 family. Homotetramer. Autoproteolytically processed. The inactive tetrameric zymogen termed p46 autoprocesses to a smaller form termed p41, which is active only during spore germination.

The catalysed reaction is Endopeptidase action with P4 Glu or Asp, P1 preferably Glu &gt; Asp, P1' hydrophobic and P2' Ala.. In terms of biological role, initiates the rapid degradation of small, acid-soluble proteins during spore germination. This is Germination protease from Clostridium perfringens (strain 13 / Type A).